Consider the following 649-residue polypeptide: Transcription factor tau 95 kDa subunit (649 aa).

Positions 1-21 (MPVEEPLATLSSIPDSSADQA) are disordered. Over residues 9 to 19 (TLSSIPDSSAD) the composition is skewed to polar residues. The stretch at 221 to 239 (PSTDFQLPPPPKLSMVGFP) is repeat 1. The interval 221–419 (PSTDFQLPPP…PPLVFESDTP (199 aa)) is 2 X repeats, Pro-rich. Positions 296–300 (AKKTK) match the Nuclear localization signal motif. The stretch at 400-419 (PIVKKNVPKPPPLVFESDTP) is repeat 2. The tract at residues 556 to 612 (IAAGDDFDDNGAITEEPDDAALENEEMDTDQNLKVPASIDDDVDDVDADEEEQESFD) is disordered. Acidic residues-rich tracts occupy residues 560–584 (DDFD…EMDT) and 594–610 (IDDD…EQES). Residue Ser617 is modified to Phosphoserine.

It belongs to the TFIIIC subunit 5 family. As to quaternary structure, component of the TFIIIC complex composed of TFC1, TFC3, TFC4, TFC6, TFC7 and TFC8. The subunits are organized in two globular domains, tauA and tauB, connected by a proteolysis-sensitive and flexible linker. Interacts with TFC3, TFC4 and TFC6.

The protein resides in the nucleus. Its function is as follows. TFIIIC mediates tRNA and 5S RNA gene activation by binding to intragenic promoter elements. Upstream of the transcription start site, TFIIIC assembles the initiation complex TFIIIB-TFIIIC-tDNA, which is sufficient for RNA polymerase III recruitment and function. Part of the tauA domain of TFIIIC that binds boxA DNA promoter sites of tRNA and similar genes. Participates in the interconnection of tauA with tauB via its contacts with TFC3 and TFC6. Serves as a scaffold critical for tauA-DNA spatial configuration and tauB-DNA stability. This is Transcription factor tau 95 kDa subunit (TFC1) from Saccharomyces cerevisiae (strain ATCC 204508 / S288c) (Baker's yeast).